A 224-amino-acid polypeptide reads, in one-letter code: 7-cyano-7-deazaguanine synthase (224 aa).

12–22 (MSGGMDSTLGA) contributes to the ATP binding site. 4 residues coordinate Zn(2+): C191, C199, C202, and C205.

The protein belongs to the QueC family. It depends on Zn(2+) as a cofactor.

The catalysed reaction is 7-carboxy-7-deazaguanine + NH4(+) + ATP = 7-cyano-7-deazaguanine + ADP + phosphate + H2O + H(+). It functions in the pathway purine metabolism; 7-cyano-7-deazaguanine biosynthesis. In terms of biological role, catalyzes the ATP-dependent conversion of 7-carboxy-7-deazaguanine (CDG) to 7-cyano-7-deazaguanine (preQ(0)). This is 7-cyano-7-deazaguanine synthase from Sulfurimonas denitrificans (strain ATCC 33889 / DSM 1251) (Thiomicrospira denitrificans (strain ATCC 33889 / DSM 1251)).